A 67-amino-acid chain; its full sequence is ATP synthase F(0) complex subunit 8 (67 aa).

Residues 8–24 (TWFINIVSMILTLFIVF) traverse the membrane as a helical segment. Lys-54 is subject to N6-acetyllysine; alternate. At Lys-54 the chain carries N6-succinyllysine; alternate. The residue at position 57 (Lys-57) is an N6-acetyllysine.

It belongs to the ATPase protein 8 family. As to quaternary structure, component of the ATP synthase complex composed at least of ATP5F1A/subunit alpha, ATP5F1B/subunit beta, ATP5MC1/subunit c (homooctomer), MT-ATP6/subunit a, MT-ATP8/subunit 8, ATP5ME/subunit e, ATP5MF/subunit f, ATP5MG/subunit g, ATP5MK/subunit k, ATP5MJ/subunit j, ATP5F1C/subunit gamma, ATP5F1D/subunit delta, ATP5F1E/subunit epsilon, ATP5PF/subunit F6, ATP5PB/subunit b, ATP5PD/subunit d, ATP5PO/subunit OSCP. ATP synthase complex consists of a soluble F(1) head domain (subunits alpha(3) and beta(3)) - the catalytic core - and a membrane F(0) domain - the membrane proton channel (subunits c, a, 8, e, f, g, k and j). These two domains are linked by a central stalk (subunits gamma, delta, and epsilon) rotating inside the F1 region and a stationary peripheral stalk (subunits F6, b, d, and OSCP). Interacts with PRICKLE3.

It is found in the mitochondrion membrane. In terms of biological role, subunit 8, of the mitochondrial membrane ATP synthase complex (F(1)F(0) ATP synthase or Complex V) that produces ATP from ADP in the presence of a proton gradient across the membrane which is generated by electron transport complexes of the respiratory chain. ATP synthase complex consist of a soluble F(1) head domain - the catalytic core - and a membrane F(1) domain - the membrane proton channel. These two domains are linked by a central stalk rotating inside the F(1) region and a stationary peripheral stalk. During catalysis, ATP synthesis in the catalytic domain of F(1) is coupled via a rotary mechanism of the central stalk subunits to proton translocation. In vivo, can only synthesize ATP although its ATP hydrolase activity can be activated artificially in vitro. Part of the complex F(0) domain. This is ATP synthase F(0) complex subunit 8 from Equus asinus (Donkey).